The following is a 269-amino-acid chain: Bifunctional protein FolD (269 aa).

NADP(+) contacts are provided by residues 149-151 (GLG) and V215.

This sequence belongs to the tetrahydrofolate dehydrogenase/cyclohydrolase family. In terms of assembly, homodimer.

It catalyses the reaction (6R)-5,10-methylene-5,6,7,8-tetrahydrofolate + NADP(+) = (6R)-5,10-methenyltetrahydrofolate + NADPH. It carries out the reaction (6R)-5,10-methenyltetrahydrofolate + H2O = (6R)-10-formyltetrahydrofolate + H(+). The protein operates within one-carbon metabolism; tetrahydrofolate interconversion. In terms of biological role, catalyzes the oxidation of 5,10-methylenetetrahydrofolate to 5,10-methenyltetrahydrofolate and then the hydrolysis of 5,10-methenyltetrahydrofolate to 10-formyltetrahydrofolate. The chain is Bifunctional protein FolD from Mycoplasma pneumoniae (strain ATCC 29342 / M129 / Subtype 1) (Mycoplasmoides pneumoniae).